The following is a 232-amino-acid chain: Venom allergen 5 (232 aa).

The first 23 residues, 1-23, serve as a signal peptide directing secretion; sequence MEQIKYLLIGIIFSSAISSSLQC. 3 cysteine pairs are disulfide-bonded: Cys28–Cys43, Cys54–Cys119, and Cys198–Cys215. The SCP domain occupies 71–217; sequence LQLHNELRAK…FYTTMVACNY (147 aa).

Belongs to the CRISP family. Venom allergen 5-like subfamily. In terms of tissue distribution, expressed by the venom gland.

Its subcellular location is the secreted. This chain is Venom allergen 5, found in Microctonus hyperodae (Parasitoid wasp).